We begin with the raw amino-acid sequence, 1413 residues long: Leucine-rich repeat receptor protein kinase MSL1 (1413 aa).

Positions 1–23 (MAPMLSIASRSPSPALIAPHASA) are cleaved as a signal peptide. Asparagine 153 and asparagine 192 each carry an N-linked (GlcNAc...) asparagine glycan. 29 LRR repeats span residues 185–209 (FQSLVRLNVSGCGFSGELPEAMVNL), 210–233 (QHLQHLDLSDNQLGGPLPASLFDL), 235–257 (MLKVMVLDNNMFSGQLSPAIAHL), 258–281 (QQLTVLSISTNSFSGGLPPELGSL), 282–304 (KNLEYLDIHTNAFSGSIPASFSN), 306–329 (SRLLYLDANNNNLTGSIFPGIRAL), 330–353 (VNLVKLDLSSNGLVGAIPKELCQL), 354–377 (KNLQSLILSDNELTGSIPEEIGNL), 379–401 (QLEVLNLLKCNLMDTVPLSIGNL), 402–425 (EILEGLYISFNSFSGELPASVGEL), 427–449 (NLRQLMAKSAGFTGSIPKELGNC), 450–473 (KKLTTLVLSGNNFTGTIPEELADL), 475–497 (AVVLFDVEGNRLSGHIPDWIQNW), 498–518 (SNVSSISLAQNMFDGPLPGLP), 519–542 (LHLVSFSAESNRLSGSIPAKICQG), 543–565 (TFLQILRLNDNNLTGSIDETFKG), 567–589 (KNLTELSLLDNHLHGEIPEYLAL), 590–613 (LPLVSLDLSHNNFTGMIPDRLWES), 615–636 (TILDISLSDNQLTGMITESIGK), 637–661 (LLSLQSLSIDRNYLQGPLPRSIGAL), 662–685 (RNLTALSLSGNMLSEDIPIQLFNC), 687–709 (NLVTLDLSCNNLTGHIPKAISHL), 710–733 (TKLNTLVLSRNRLSGAIPSELCVA), 745–769 (VQHIGLIDLSRNRLTGHIPRAINNC), 771–793 (ILVELHLQDNLLSGTIPVELAEL), 794–817 (RNITTIDLSSNALVGPVLPWPVPL), 818–841 (ASLQGLLLSNNRLSGSIPSGIGNI), 843–866 (PQITMLDLSGNALTGTLPLDLLCK), and 868–890 (SLNHLDVSDNNISGQIPFSCHED). 2 N-linked (GlcNAc...) asparagine glycosylation sites follow: asparagine 304 and asparagine 317. 3 N-linked (GlcNAc...) asparagine glycosylation sites follow: asparagine 461, asparagine 496, and asparagine 499. N-linked (GlcNAc...) asparagine glycosylation is found at asparagine 554, asparagine 568, and asparagine 601. N-linked (GlcNAc...) asparagine glycans are attached at residues asparagine 663 and asparagine 697. Asparagine 768 carries N-linked (GlcNAc...) asparagine glycosylation. Asparagine 795 carries an N-linked (GlcNAc...) asparagine glycan. 4 N-linked (GlcNAc...) asparagine glycosylation sites follow: asparagine 878, asparagine 901, asparagine 917, and asparagine 928. LRR repeat units follow at residues 918–942 (FTKLTYLDLHNNSLTGRLPSAIARV) and 944–966 (SLYYLDLSSNDFSGTIPCGICGM). N-linked (GlcNAc...) asparagine glycosylation occurs at asparagine 973. Residues 1016 to 1036 (TICCIATAIVIVLVVILVVYL) form a helical membrane-spanning segment. The region spanning 1107–1401 (FDGMHVVGDG…IEAMEYGPLV (295 aa)) is the Protein kinase domain. ATP-binding positions include 1113–1121 (VGDGGFGTV) and lysine 1135. The active-site Proton acceptor is aspartate 1234.

Belongs to the protein kinase superfamily. Ser/Thr protein kinase family. In terms of tissue distribution, expressed in roots, leaves, shoots and spikelets.

It localises to the cell membrane. It catalyses the reaction L-seryl-[protein] + ATP = O-phospho-L-seryl-[protein] + ADP + H(+). The catalysed reaction is L-threonyl-[protein] + ATP = O-phospho-L-threonyl-[protein] + ADP + H(+). In terms of biological role, receptor-like kinase that may play a role male and female sporogenesis. This Oryza sativa subsp. japonica (Rice) protein is Leucine-rich repeat receptor protein kinase MSL1.